Reading from the N-terminus, the 182-residue chain is MGLLSILRKLKSTPDQEVRILLLGLDNGGKTTLLKQLASEDITHITPTQGFNIKSVQSQGFKLNVWDIGGQRKIRPYWRNYFENTDVLIYVIDSADRKRFEETGQELAELLDEEKLSGVPVLVFANKQDLLTAAPASEIAEGLNLHTIRDRVWQIQSCSALTGEGVQDGMNWVCKSVNAKRK.

A lipid anchor (N-myristoyl glycine) is attached at glycine 2. GTP-binding positions include 24 to 31 (GLDNGGKT), 67 to 71 (DIGGQ), and 126 to 129 (NKQD).

The protein belongs to the small GTPase superfamily. Arf family.

The protein localises to the golgi apparatus membrane. It localises to the cytoplasm. Its subcellular location is the cytoskeleton. It is found in the spindle. The protein resides in the nucleus. The protein localises to the microtubule organizing center. It localises to the centrosome. Its subcellular location is the cell projection. It is found in the cilium. In terms of biological role, small GTP-binding protein which cycles between an inactive GDP-bound and an active GTP-bound form, and the rate of cycling is regulated by guanine nucleotide exchange factors (GEF) and GTPase-activating proteins (GAP). Required for normal cytokinesis and cilia signaling. Required for targeting proteins to the ciliary membrane by releasing myristoylated protein from unc119 cargo adapters into the cilium. The chain is ADP-ribosylation factor-like protein 3 (arl3) from Danio rerio (Zebrafish).